The chain runs to 82 residues: Cytochrome c-551 (82 aa).

Positions 12, 15, 16, and 61 each coordinate heme c.

Binds 1 heme c group covalently per subunit.

The sequence is that of Cytochrome c-551 from Azotobacter vinelandii.